We begin with the raw amino-acid sequence, 156 residues long: Lipoprotein signal peptidase (156 aa).

A run of 3 helical transmembrane segments spans residues 5 to 25, 64 to 84, and 89 to 109; these read FKFIFYFWGAFVLVFVLDQWV, YLHLALIVVLFIYLFWQKTLL, and IAFGMMLGAGVSNLLDRFIHG. Catalysis depends on residues Asp-113 and Asp-130. The helical transmembrane segment at 122–142 threads the bilayer; that stretch reads NFAIFNVADVMINISVALILI.

The protein belongs to the peptidase A8 family.

Its subcellular location is the cell inner membrane. The catalysed reaction is Release of signal peptides from bacterial membrane prolipoproteins. Hydrolyzes -Xaa-Yaa-Zaa-|-(S,diacylglyceryl)Cys-, in which Xaa is hydrophobic (preferably Leu), and Yaa (Ala or Ser) and Zaa (Gly or Ala) have small, neutral side chains.. It participates in protein modification; lipoprotein biosynthesis (signal peptide cleavage). Functionally, this protein specifically catalyzes the removal of signal peptides from prolipoproteins. The chain is Lipoprotein signal peptidase from Campylobacter jejuni subsp. jejuni serotype O:6 (strain 81116 / NCTC 11828).